A 756-amino-acid polypeptide reads, in one-letter code: MSLRRLSPSHLILGTLVLGVIIFNLYVLTSTHEDIKKVKGPTYHTSDNTKIQSHISNYDSEEYVDRLTAEIEDAKKEELISEIRKKLEIQEKPGVIQKLKTELRMKYIDDIKNHLKQEITEQYSNEIFKQYAFSFEIYSKKVDEYALQLENSLKPASCLAILQQAEKDTDSIPDLENYLTKANDKYFKRQEYWRYLLKDILLNNKPKCEPLTKEEKGEKLNPTYQWDARIISEQYLLGSKLTIPGEKFRALRSAHDQVVKQLKSLPDPPSQFISGHGIVVNGGGNMIGSALTAIANMRERGSQLPVELILDTKQEYDKQICEELLPKKLNGKCVIVEEQVGKEVFDIINEKFSRKIMGLLVSSFDHIIAMDADNLAIKNVDNLLFTEPYLSTKMILWPDLWVKLTSPLYYKIARIEPGEIVDRFGIPNDASFAEYITKDKQSEVHYHDLDNLPSTISVETGQMVFSKREHLKSLLLALYYNINGKDFYIDLLYQGAYGEGDRETIVPALHVMNERYSLTNHKVHILGYDAPNGKYSETTLGQTDPRDGFEFYQDWRKFLTSRKLDTRLNPFQSGGYTSDLMKQFHDYKRQIYQDKQYEDEAAVHRMITYKLPSILFLHCNHPKIDPLKNSKEADAEFGVYSRRNMGLPDKVEKLLEGKDWELRFHTISQWVACEAISKSSLYWEKIAGKSQQQVCESVGKYIEFLKKDTFDNEATKLTILNQLGEKSQPKQPEINNNNNNNNNDDDNGKNKQGAAS.

Residues 1–10 lie on the Cytoplasmic side of the membrane; it reads MSLRRLSPSH. A helical membrane pass occupies residues 11-31; that stretch reads LILGTLVLGVIIFNLYVLTST. Residues 32-756 are Extracellular-facing; the sequence is HEDIKKVKGP…NGKNKQGAAS (725 aa). The segment covering 723 to 734 has biased composition (polar residues); sequence LGEKSQPKQPEI. A disordered region spans residues 723 to 756; that stretch reads LGEKSQPKQPEINNNNNNNNNDDDNGKNKQGAAS.

It belongs to the MNN1/MNT family.

The protein localises to the golgi apparatus membrane. It functions in the pathway protein modification; protein glycosylation. Alpha-1,2-mannosyltransferase required for cell wall integrity. Responsible for addition of the first alpha-1,2-linked mannose to form the branches on the mannan backbone of oligosaccharides. Addition of alpha-1,2-mannose is required for stabilization of the alpha-1,6-mannose backbone and hence regulates mannan fibril length; and is important for both immune recognition and virulence. This is Alpha-1,2-mannosyltransferase MNN26 (MNN26) from Candida albicans (strain SC5314 / ATCC MYA-2876) (Yeast).